Here is a 305-residue protein sequence, read N- to C-terminus: tRNA dimethylallyltransferase (305 aa).

11 to 18 is an ATP binding site; the sequence is GPTAVGKT. 13–18 contributes to the substrate binding site; sequence TAVGKT. The tract at residues 36 to 39 is interaction with substrate tRNA; that stretch reads DSMQ.

It belongs to the IPP transferase family. As to quaternary structure, monomer. The cofactor is Mg(2+).

It catalyses the reaction adenosine(37) in tRNA + dimethylallyl diphosphate = N(6)-dimethylallyladenosine(37) in tRNA + diphosphate. Catalyzes the transfer of a dimethylallyl group onto the adenine at position 37 in tRNAs that read codons beginning with uridine, leading to the formation of N6-(dimethylallyl)adenosine (i(6)A). The chain is tRNA dimethylallyltransferase from Listeria innocua serovar 6a (strain ATCC BAA-680 / CLIP 11262).